Consider the following 123-residue polypeptide: Photosystem II extrinsic protein U (123 aa).

Residues 1–28 form the signal peptide; that stretch reads MKTLARILVVFTLIVGLIGFFNPLPAQA.

This sequence belongs to the PsbU family. As to quaternary structure, PSII is composed of 1 copy each of membrane proteins PsbA, PsbB, PsbC, PsbD, PsbE, PsbF, PsbH, PsbI, PsbJ, PsbK, PsbL, PsbM, PsbT, PsbX, PsbY, PsbZ, Psb30/Ycf12, peripheral proteins PsbO, CyanoQ (PsbQ), PsbU, PsbV and a large number of cofactors. It forms dimeric complexes.

The protein resides in the cellular thylakoid membrane. Its function is as follows. One of the extrinsic, lumenal subunits of photosystem II (PSII). PSII is a light-driven water plastoquinone oxidoreductase, using light energy to abstract electrons from H(2)O, generating a proton gradient subsequently used for ATP formation. The extrinsic proteins stabilize the structure of photosystem II oxygen-evolving complex (OEC), the ion environment of oxygen evolution and protect the OEC against heat-induced inactivation. The polypeptide is Photosystem II extrinsic protein U (Gloeothece citriformis (strain PCC 7424) (Cyanothece sp. (strain PCC 7424))).